A 143-amino-acid polypeptide reads, in one-letter code: Nucleoside diphosphate kinase (143 aa).

Lysine 11, phenylalanine 59, arginine 87, threonine 93, arginine 104, and asparagine 114 together coordinate ATP. The Pros-phosphohistidine intermediate role is filled by histidine 117.

It belongs to the NDK family. In terms of assembly, homotetramer. The cofactor is Mg(2+).

Its subcellular location is the cytoplasm. It carries out the reaction a 2'-deoxyribonucleoside 5'-diphosphate + ATP = a 2'-deoxyribonucleoside 5'-triphosphate + ADP. The enzyme catalyses a ribonucleoside 5'-diphosphate + ATP = a ribonucleoside 5'-triphosphate + ADP. Functionally, major role in the synthesis of nucleoside triphosphates other than ATP. The ATP gamma phosphate is transferred to the NDP beta phosphate via a ping-pong mechanism, using a phosphorylated active-site intermediate. The polypeptide is Nucleoside diphosphate kinase (Edwardsiella ictaluri (strain 93-146)).